A 127-amino-acid polypeptide reads, in one-letter code: uncharacterized protein (127 aa).

This is an uncharacterized protein from Homo sapiens (Human).